The chain runs to 228 residues: MSVSEIFVELQGFLAAEQDIREEIRKVVQSLEQTAREILTLLQGVHQGAGFQDIPKRCLKAREHFGTVKTHLTSLKTKFPAEQYYRFHEHWRFVLQRLVFLAAFVVYLETETLVTREAVTEILGIEPDREKGFHLDVEDYLSGVLILASELSRLSVNSVTAGDYSRPLHISTFINELDSGFRLLNLKNDSLRKRYDGLKYDVKKVEEVVYDLSIRGFNKETAAACVEK.

Positions 86–90 are DNA/RNA binding; that stretch reads RFHEH. A leucine-zipper region spans residues 177-198; it reads LDSGFRLLNLKNDSLRKRYDGL. Lys-187 bears the N6-acetyllysine mark. Ser-190 carries the phosphoserine modification. Lys-199 is subject to N6-acetyllysine.

This sequence belongs to the translin family. In terms of assembly, ring-shaped heterooctamer of six TSN and two TSNAX subunits, DNA/RNA binding occurs inside the ring.

The protein localises to the cytoplasm. Its subcellular location is the nucleus. In terms of biological role, DNA-binding protein that specifically recognizes consensus sequences at the breakpoint junctions in chromosomal translocations, mostly involving immunoglobulin (Ig)/T-cell receptor gene segments. Seems to recognize single-stranded DNA ends generated by staggered breaks occurring at recombination hot spots. Exhibits both single-stranded and double-stranded endoribonuclease activity. May act as an activator of RNA-induced silencing complex (RISC) by facilitating endonucleolytic cleavage of the siRNA passenger strand. The chain is Translin from Homo sapiens (Human).